Reading from the N-terminus, the 386-residue chain is Succinate--CoA ligase [ADP-forming] subunit beta (386 aa).

Residues 9 to 244 (KEILRKYGVP…HDEEDPLETR (236 aa)) enclose the ATP-grasp domain. Residues lysine 46, 53–55 (GRG), glutamate 99, cysteine 102, and glutamate 107 contribute to the ATP site. Mg(2+) contacts are provided by asparagine 199 and aspartate 213. Substrate contacts are provided by residues asparagine 264 and 321 to 323 (GIM).

It belongs to the succinate/malate CoA ligase beta subunit family. Heterotetramer of two alpha and two beta subunits. Mg(2+) is required as a cofactor.

It carries out the reaction succinate + ATP + CoA = succinyl-CoA + ADP + phosphate. It catalyses the reaction GTP + succinate + CoA = succinyl-CoA + GDP + phosphate. It participates in carbohydrate metabolism; tricarboxylic acid cycle; succinate from succinyl-CoA (ligase route): step 1/1. Its function is as follows. Succinyl-CoA synthetase functions in the citric acid cycle (TCA), coupling the hydrolysis of succinyl-CoA to the synthesis of either ATP or GTP and thus represents the only step of substrate-level phosphorylation in the TCA. The beta subunit provides nucleotide specificity of the enzyme and binds the substrate succinate, while the binding sites for coenzyme A and phosphate are found in the alpha subunit. This chain is Succinate--CoA ligase [ADP-forming] subunit beta, found in Rickettsia akari (strain Hartford).